The chain runs to 494 residues: DUF21 domain-containing protein At4g14240 (494 aa).

Over 1–43 the chain is Extracellular; it reads MHLINAVAAARILSGIGQSNGNNGGEAIPFGSFEWITYAGISC. Positions 31-213 constitute a CNNM transmembrane domain; the sequence is GSFEWITYAG…GKGGELTHDE (183 aa). The helical transmembrane segment at 44 to 64 threads the bilayer; it reads FLVLFAGIMSGLTLGLMSLGL. Residues 65–93 are Cytoplasmic-facing; sequence VELEILQRSGTPNEKKQAAAIFPVVQKQH. The helical transmembrane segment at 94 to 114 threads the bilayer; sequence QLLVTLLLCNAMAMEGLPIYL. Residues 115–121 lie on the Extracellular side of the membrane; it reads DKLFNEY. The chain crosses the membrane as a helical span at residues 122-142; it reads VAIILSVTFVLAFGEVIPQAI. Topologically, residues 143 to 159 are cytoplasmic; the sequence is CTRYGLAVGANFVWLVR. Residues 160–180 traverse the membrane as a helical segment; it reads ILMTLCYPIAFPIGKILDLVL. The Extracellular segment spans residues 181–494; that stretch reads GHNDALFRRA…TITEPIRRNN (314 aa). 3 CBS domains span residues 232–292, 297–352, and 364–425; these read MTPI…TETL, CIRR…SNDS, and GNHD…IVDE. Residues Asn350 and Asn385 are each glycosylated (N-linked (GlcNAc...) asparagine). Residues 459 to 494 are disordered; the sequence is QKGTGGQNKQGQTNKVPGQEQDKMLGTITEPIRRNN.

The protein resides in the membrane. In Arabidopsis thaliana (Mouse-ear cress), this protein is DUF21 domain-containing protein At4g14240 (CBSDUF1).